The following is a 215-amino-acid chain: Nucleoside triphosphate pyrophosphatase (215 aa).

It belongs to the Maf family. Requires a divalent metal cation as cofactor.

It is found in the cytoplasm. The catalysed reaction is a ribonucleoside 5'-triphosphate + H2O = a ribonucleoside 5'-phosphate + diphosphate + H(+). It carries out the reaction a 2'-deoxyribonucleoside 5'-triphosphate + H2O = a 2'-deoxyribonucleoside 5'-phosphate + diphosphate + H(+). Its function is as follows. Nucleoside triphosphate pyrophosphatase. May have a dual role in cell division arrest and in preventing the incorporation of modified nucleotides into cellular nucleic acids. This is Nucleoside triphosphate pyrophosphatase from Rickettsia conorii (strain ATCC VR-613 / Malish 7).